Consider the following 831-residue polypeptide: Myosin-A (831 aa).

Residues Met99–Arg773 enclose the Myosin motor domain. Gly193–Thr200 contributes to the ATP binding site. The tract at residues Pro663–Asp673 is actin-binding. The tail stretch occupies residues Cys775–Phe831.

It belongs to the TRAFAC class myosin-kinesin ATPase superfamily. Myosin family.

It is found in the cell membrane. In terms of biological role, myosins are actin-based motor molecules with ATPase activity. Unconventional myosins serve in intracellular movements. Their highly divergent tails are presumed to bind to membranous compartments, which would be moved relative to actin filaments. In Toxoplasma gondii, this protein is Myosin-A.